A 354-amino-acid polypeptide reads, in one-letter code: 4-hydroxy-2-oxovalerate aldolase 5 (354 aa).

Positions 11-263 constitute a Pyruvate carboxyltransferase domain; that stretch reads VTVHDMCLRD…ETGCDLFKLM (253 aa). Residue 19-20 coordinates substrate; the sequence is RD. Aspartate 20 is a binding site for Mn(2+). Residue histidine 23 is the Proton acceptor of the active site. The substrate site is built by serine 173 and histidine 202. Histidine 202 and histidine 204 together coordinate Mn(2+). Residue tyrosine 293 coordinates substrate.

The protein belongs to the 4-hydroxy-2-oxovalerate aldolase family.

It catalyses the reaction (S)-4-hydroxy-2-oxopentanoate = acetaldehyde + pyruvate. This chain is 4-hydroxy-2-oxovalerate aldolase 5, found in Dechloromonas aromatica (strain RCB).